The chain runs to 322 residues: Elongation factor Ts, mitochondrial (322 aa).

It belongs to the EF-Ts family.

The protein localises to the mitochondrion. In terms of biological role, associates with the EF-Tu.GDP complex and induces the exchange of GDP to GTP. It remains bound to the aminoacyl-tRNA.EF-Tu.GTP complex up to the GTP hydrolysis stage on the ribosome. The chain is Elongation factor Ts, mitochondrial from Chlamydomonas reinhardtii (Chlamydomonas smithii).